Reading from the N-terminus, the 110-residue chain is Circadian clock oscillator protein KaiB (110 aa).

The protein belongs to the KaiB family. The KaiABC complex composition changes during the circadian cycle to control KaiC phosphorylation. Complexes KaiC(6), KaiA(2-4):KaiC(6), KaiB(6):KaiC(6) and KaiC(6):KaiB(6):KaiA(12) are among the most important forms, many form cooperatively. Undergoes a major conformational rearrangment; in the free state forms homotetramers as a dimer of dimers. When bound to the CI domain of KaiC switches to a monomeric thioredoxin-fold (KaiB(fs)). KaiB(fs) binds CikA, leading it to dephosphorylate phospho-RpaA.

Key component of the KaiABC oscillator complex, which constitutes the main circadian regulator in cyanobacteria. Complex composition changes during the circadian cycle to control KaiC phosphorylation. KaiA stimulates KaiC autophosphorylation, while KaiB sequesters KaiA, leading to KaiC autodephosphorylation. Phospho-Ser-431 KaiC accumulation triggers binding of KaiB to form the KaiB(6):KaiC(6) complex, leading to changes in output regulators CikA and SasA. KaiB switches to a thioredoxin-like fold (KaiB(fs)) when bound to KaiC. KaiB(6):KaiC(6) formation exposes a site for KaiA binding that sequesters KaiA from KaiC, making the KaiC(6):KaiB(6):KaiA(12) complex that results in KaiC autodephosphorylation. In terms of biological role, a metamorphic protein which reversibly switches between an inactive tetrameric fold and a rare, thioredoxin-like monomeric fold (KaiB(fs)). KaiB(fs) binds phospho-KaiC, KaiA and CikA. KaiA and CikA compete for binding to KaiB(fs), and KaiB(fs) and SasA compete for binding to KaiC, thus the clock oscillator and output signal pathway are tightly coupled. This chain is Circadian clock oscillator protein KaiB, found in Synechococcus sp. (strain RCC307).